The primary structure comprises 514 residues: Probable cytochrome P450 6w1 (514 aa).

A heme-binding site is contributed by Cys-450.

Belongs to the cytochrome P450 family. Requires heme as cofactor.

The protein resides in the endoplasmic reticulum membrane. It localises to the microsome membrane. Functionally, may be involved in the metabolism of insect hormones and in the breakdown of synthetic insecticides. This is Probable cytochrome P450 6w1 (Cyp6w1) from Drosophila melanogaster (Fruit fly).